A 198-amino-acid chain; its full sequence is PEP-dependent dihydroxyacetone kinase 1, ADP-binding subunit DhaL (198 aa).

The 189-residue stretch at 6 to 194 folds into the DhaL domain; the sequence is DWALRWLNDF…SALLFHAMLQ (189 aa). Mg(2+)-binding residues include D30, D35, and D37. ADP contacts are provided by residues 38–41, 79–80, G120, M129, R166, and 179–181; these read HGIN, AS, and DPG.

As to quaternary structure, homodimer. The dihydroxyacetone kinase complex is composed of a homodimer of DhaM, a homodimer of DhaK and the subunit DhaL. Mg(2+) is required as a cofactor.

The protein resides in the cytoplasm. The catalysed reaction is dihydroxyacetone + phosphoenolpyruvate = dihydroxyacetone phosphate + pyruvate. It functions in the pathway polyol metabolism; glycerol degradation. Functionally, ADP-binding subunit of the dihydroxyacetone kinase, which is responsible for the phosphoenolpyruvate (PEP)-dependent phosphorylation of dihydroxyacetone. DhaL-ADP is converted to DhaL-ATP via a phosphoryl group transfer from DhaM and transmits it to dihydroxyacetone binds to DhaK. This is PEP-dependent dihydroxyacetone kinase 1, ADP-binding subunit DhaL from Listeria innocua serovar 6a (strain ATCC BAA-680 / CLIP 11262).